A 364-amino-acid chain; its full sequence is Aminomethyltransferase (364 aa).

This sequence belongs to the GcvT family. The glycine cleavage system is composed of four proteins: P, T, L and H.

The catalysed reaction is N(6)-[(R)-S(8)-aminomethyldihydrolipoyl]-L-lysyl-[protein] + (6S)-5,6,7,8-tetrahydrofolate = N(6)-[(R)-dihydrolipoyl]-L-lysyl-[protein] + (6R)-5,10-methylene-5,6,7,8-tetrahydrofolate + NH4(+). The glycine cleavage system catalyzes the degradation of glycine. The polypeptide is Aminomethyltransferase (Shewanella halifaxensis (strain HAW-EB4)).